The chain runs to 514 residues: Variant surface glycoprotein ILTAT 1.24 (514 aa).

Residues 1–23 (MVYRNILQLSVLKVLLIVLIVEA) form the signal peptide. 2 disulfides stabilise this stretch: Cys37-Cys162 and Cys143-Cys204. Asn443 carries N-linked (GlcNAc...) asparagine glycosylation. The disordered stretch occupies residues 451–476 (GVPVTQTQTAGADTTAEKCKGKGEKD). Low complexity predominate over residues 455–464 (TQTQTAGADT). Basic and acidic residues predominate over residues 465–476 (TAEKCKGKGEKD). The GPI-anchor amidated aspartate moiety is linked to residue Asp491. Positions 492 to 514 (SSILANKQFALSVASAAFVALLF) are cleaved as a propeptide — removed in mature form.

Its subcellular location is the cell membrane. Its function is as follows. VSG forms a coat on the surface of the parasite. The trypanosome evades the immune response of the host by expressing a series of antigenically distinct VSGs from an estimated 1000 VSG genes. This Trypanosoma brucei brucei protein is Variant surface glycoprotein ILTAT 1.24.